The sequence spans 604 residues: Nuclear cap-binding protein subunit 3 (604 aa).

The tract at residues 1 to 36 (MAAVRGLRISVKAEATATTAEPRGPEPEPMEVEEGE) is disordered. Positions 116–177 (DTIYICGVDE…MSSFPDQEKP (62 aa)) are RNA recognition motif (RRM) domain. The WLDD motif; essential for 7-methylguanosine-containing mRNA cap binding motif lies at 145 to 148 (WLDD). 3 disordered regions span residues 168 to 219 (MSSF…DIEL), 319 to 383 (KHRH…DSDE), and 457 to 604 (QNNN…DTES). Residues 173 to 198 (DQEKPKGGENNEEKTAEKNKKEKQEE) show a composition bias toward basic and acidic residues. Composition is skewed to acidic residues over residues 199-219 (STDD…DIEL) and 331-349 (EPIE…DEDD). Positions 350–370 (RVVVEYRDDLQPFKQSRDRGA) are enriched in basic and acidic residues. A compositionally biased stretch (polar residues) spans 458 to 469 (NNNGLRQPNSIV). Basic and acidic residues-rich tracts occupy residues 495 to 505 (PRREPISDVHS), 539 to 548 (TQEKTSDKPE), and 569 to 582 (IKEK…KSRL). The segment covering 595-604 (ESSSGSDTES) has biased composition (low complexity).

The protein belongs to the NCBP3 family. Component of an alternative cap-binding complex (CBC) composed of NCBP1/CBP80 and NCBP3.

Its subcellular location is the nucleus. The protein localises to the cytoplasm. In terms of biological role, associates with NCBP1/CBP80 to form an alternative cap-binding complex (CBC) which plays a key role in mRNA export. NCBP3 serves as adapter protein linking the capped RNAs (m7GpppG-capped RNA) to NCBP1/CBP80. Unlike the conventional CBC with NCBP2 which binds both small nuclear RNA (snRNA) and messenger (mRNA) and is involved in their export from the nucleus, the alternative CBC with NCBP3 does not bind snRNA and associates only with mRNA thereby playing a role in only mRNA export. The sequence is that of Nuclear cap-binding protein subunit 3 from Gallus gallus (Chicken).